The following is a 106-amino-acid chain: MKSYAIIQTGSKQYQVSEGDVIDVELLDGISEGQEIVFDQVLFTFDGSKVSLGTPIVKDAVVKGQLLSQVRGEKVTAYKYKRRKNYHRKTGHRQNYLRVKISNLVI.

The protein belongs to the bacterial ribosomal protein bL21 family. In terms of assembly, part of the 50S ribosomal subunit. Contacts protein L20.

This protein binds to 23S rRNA in the presence of protein L20. In Chlamydia caviae (strain ATCC VR-813 / DSM 19441 / 03DC25 / GPIC) (Chlamydophila caviae), this protein is Large ribosomal subunit protein bL21.